The chain runs to 419 residues: Histidine--tRNA ligase (419 aa).

This sequence belongs to the class-II aminoacyl-tRNA synthetase family. As to quaternary structure, homodimer.

It is found in the cytoplasm. The catalysed reaction is tRNA(His) + L-histidine + ATP = L-histidyl-tRNA(His) + AMP + diphosphate + H(+). This chain is Histidine--tRNA ligase, found in Thermosipho melanesiensis (strain DSM 12029 / CIP 104789 / BI429).